Reading from the N-terminus, the 457-residue chain is D-hydantoinase (457 aa).

Zn(2+) contacts are provided by His57 and His59. Ser69 carries the phosphoserine modification. Lys148 provides a ligand contact to Zn(2+). Lys148 is subject to N6-carboxylysine. Tyr153 is a substrate binding site. The Zn(2+) site is built by His181 and His237. Thr286 is a binding site for substrate. Zn(2+) is bound at residue Asp313. Asn335 lines the substrate pocket.

This sequence belongs to the metallo-dependent hydrolases superfamily. Hydantoinase/dihydropyrimidinase family. In terms of assembly, homodimer and homotetramer. The cofactor is Zn(2+). Post-translationally, carboxylation allows a single lysine to coordinate two zinc ions.

Catalyzes the stereospecific hydrolysis of the cyclic amide bond of D-hydantoin derivatives. The polypeptide is D-hydantoinase (hyuA) (Ralstonia pickettii (Burkholderia pickettii)).